The primary structure comprises 101 residues: Small ribosomal subunit protein bS18c (101 aa).

This sequence belongs to the bacterial ribosomal protein bS18 family. As to quaternary structure, part of the 30S ribosomal subunit.

The protein resides in the plastid. Its subcellular location is the chloroplast. The protein is Small ribosomal subunit protein bS18c of Vitis vinifera (Grape).